Consider the following 577-residue polypeptide: Methionine--tRNA ligase, mitochondrial (577 aa).

The short motif at 25–37 is the 'HIGH' region element; it reads PIFYVNAAPHIGH. Residues 329–333 carry the 'KMSKS' region motif; that stretch reads KMSKS. Lysine 332 contacts ATP.

Belongs to the class-I aminoacyl-tRNA synthetase family.

It is found in the mitochondrion matrix. The catalysed reaction is tRNA(Met) + L-methionine + ATP = L-methionyl-tRNA(Met) + AMP + diphosphate. In Candida albicans (Yeast), this protein is Methionine--tRNA ligase, mitochondrial (MSM1).